Here is a 199-residue protein sequence, read N- to C-terminus: Adenylate kinase (199 aa).

8 to 13 (GAGKGT) serves as a coordination point for ATP. The tract at residues 28–57 (STGDIFRANIKNKTELGQQVKAIVDAGDYV) is NMP. AMP is bound by residues Thr29, Arg34, 55–57 (DYV), 83–86 (GYPR), and Gln90. The interval 124–134 (KRAREQGRADD) is LID. Position 125 (Arg125) interacts with ATP. 2 residues coordinate AMP: Arg131 and Arg142. An ATP-binding site is contributed by Gly170.

It belongs to the adenylate kinase family. In terms of assembly, monomer.

It is found in the cytoplasm. The enzyme catalyses AMP + ATP = 2 ADP. It participates in purine metabolism; AMP biosynthesis via salvage pathway; AMP from ADP: step 1/1. Functionally, catalyzes the reversible transfer of the terminal phosphate group between ATP and AMP. Plays an important role in cellular energy homeostasis and in adenine nucleotide metabolism. In Leifsonia xyli subsp. xyli (strain CTCB07), this protein is Adenylate kinase.